A 207-amino-acid polypeptide reads, in one-letter code: Small ribosomal subunit protein uS4 (207 aa).

The segment at 20 to 45 (TPKAARYMEKRPYAPGEHGRTKRKAD) is disordered. The S4 RNA-binding domain occupies 93-158 (MRLDALVLRA…TEPFQVAAAG (66 aa)).

This sequence belongs to the universal ribosomal protein uS4 family. As to quaternary structure, part of the 30S ribosomal subunit. Contacts protein S5. The interaction surface between S4 and S5 is involved in control of translational fidelity.

Functionally, one of the primary rRNA binding proteins, it binds directly to 16S rRNA where it nucleates assembly of the body of the 30S subunit. With S5 and S12 plays an important role in translational accuracy. This is Small ribosomal subunit protein uS4 from Leifsonia xyli subsp. xyli (strain CTCB07).